A 261-amino-acid chain; its full sequence is Putative cysteine protease YopT-like y4zC (261 aa).

Over residues 1–15 (MHSPISGSFTSSTQV) the composition is skewed to polar residues. Disordered stretches follow at residues 1 to 48 (MHSP…CPDK) and 54 to 73 (SKPQ…ARPS). Residues 61–73 (PNNPSTSSPARPS) show a composition bias toward low complexity. Residues Cys93, His205, and Asp220 contribute to the active site.

The protein belongs to the peptidase C58 family.

Functionally, potential cysteine protease, which may play a central role after invasion of host cell. This is Putative cysteine protease YopT-like y4zC from Sinorhizobium fredii (strain NBRC 101917 / NGR234).